The following is a 163-amino-acid chain: Putative defense protein 3 (163 aa).

The first 18 residues, 1–18, serve as a signal peptide directing secretion; sequence MMFAYIVAVVSALALTSA. Residues 19–163 enclose the Reelin domain; the sequence is YPTGAPSSTC…SAPVTVLSHK (145 aa). A disulfide bond links cysteine 28 and cysteine 103.

It belongs to the insect defense protein family.

It is found in the secreted. Its function is as follows. May have antimicrobial activity. The chain is Putative defense protein 3 from Antheraea mylitta (Tasar silkworm).